A 316-amino-acid chain; its full sequence is Secondary metabolism regulator LAE1 (316 aa).

The protein belongs to the methyltransferase superfamily. LaeA methyltransferase family. In terms of assembly, component of the heterotrimeric velvet complex composed of LAE1, VEL1 and VEL2; VEL1 acting as a bridging protein between LAE1 and VEL2. Interacts with VEL1.

The protein resides in the nucleus. The enzyme catalyses L-methionyl-[protein] + S-adenosyl-L-methionine = S-methyl-L-methionyl-[protein] + S-adenosyl-L-homocysteine. Its function is as follows. Methyltransferase that performs automethylation. No other methyl-accepting substrate has been identified yet. Component of the velvet transcription factor complex that acts as a global regulator for secondary metabolite gene expression. Controls the expression of the gibberellins gene clusters, but does not affect bikaverin production. Controls the expression of the fusaric acid gene cluster. Acts as a virulence factors during infection, most likely through activation of gibberellins biosynthesis. The chain is Secondary metabolism regulator LAE1 from Gibberella fujikuroi (strain CBS 195.34 / IMI 58289 / NRRL A-6831) (Bakanae and foot rot disease fungus).